The primary structure comprises 431 residues: 3-phosphoshikimate 1-carboxyvinyltransferase (431 aa).

The 3-phosphoshikimate site is built by Lys20, Ser21, and Arg25. Lys20 contacts phosphoenolpyruvate. Phosphoenolpyruvate-binding residues include Gly91 and Arg119. The 3-phosphoshikimate site is built by Ser164, Gln166, Asp317, and Lys344. A phosphoenolpyruvate-binding site is contributed by Gln166. The active-site Proton acceptor is Asp317. The phosphoenolpyruvate site is built by Arg348 and Arg390.

This sequence belongs to the EPSP synthase family. Monomer.

It is found in the cytoplasm. The enzyme catalyses 3-phosphoshikimate + phosphoenolpyruvate = 5-O-(1-carboxyvinyl)-3-phosphoshikimate + phosphate. The protein operates within metabolic intermediate biosynthesis; chorismate biosynthesis; chorismate from D-erythrose 4-phosphate and phosphoenolpyruvate: step 6/7. Functionally, catalyzes the transfer of the enolpyruvyl moiety of phosphoenolpyruvate (PEP) to the 5-hydroxyl of shikimate-3-phosphate (S3P) to produce enolpyruvyl shikimate-3-phosphate and inorganic phosphate. The sequence is that of 3-phosphoshikimate 1-carboxyvinyltransferase from Aquifex aeolicus (strain VF5).